Here is a 656-residue protein sequence, read N- to C-terminus: Pentatricopeptide repeat-containing protein At1g62260, mitochondrial (656 aa).

PPR repeat units follow at residues 70–104 (NTVT…DVVT), 105–134 (WNTM…MPSR), 135–169 (DSFS…NAVS), 170–200 (WSAM…DSSP), 203–227 (ALVA…YGSL), 234–264 (LVYA…IPDL), 280–310 (NVVS…MKDR), 311–345 (DTIS…DAHS), 346–372 (WNMM…TPEK), 373–407 (HTVS…GEKP), 408–438 (DPHT…VVKT), 442–472 (DVPV…MKLK), 474–508 (EVIT…GIYP), 509–544 (SHIT…KIEP), and 545–575 (QMEH…MPFE). The type E motif stretch occupies residues 580–655 (VWGALLDACR…ERGSSWVDSS (76 aa)).

Belongs to the PPR family. PCMP-E subfamily.

It is found in the mitochondrion. The chain is Pentatricopeptide repeat-containing protein At1g62260, mitochondrial (PCMP-E10) from Arabidopsis thaliana (Mouse-ear cress).